The following is a 53-amino-acid chain: Conotoxin Vc5.3 (53 aa).

The first 15 residues, 1 to 15, serve as a signal peptide directing secretion; that stretch reads VILLLLTASAPSVDA. A propeptide spanning residues 16 to 41 is cleaved from the precursor; that stretch reads RPKTEDVPLSSFRDNTKSTLQRLLKR.

This sequence belongs to the conotoxin T superfamily. Contains 2 disulfide bonds that can be either 'C1-C3, C2-C4' or 'C1-C4, C2-C3', since these disulfide connectivities have been observed for conotoxins with cysteine framework V (for examples, see AC P0DQQ7 and AC P81755). As to expression, expressed by the venom duct.

The protein resides in the secreted. The protein is Conotoxin Vc5.3 of Conus victoriae (Queen Victoria cone).